A 491-amino-acid polypeptide reads, in one-letter code: 2,3-bisphosphoglycerate-independent phosphoglycerate mutase (491 aa).

2 residues coordinate Mn(2+): aspartate 11 and serine 61. Serine 61 (phosphoserine intermediate) is an active-site residue. Substrate-binding positions include histidine 118, 147-148, arginine 177, arginine 183, 247-250, and lysine 320; these read RD and RNDR. Mn(2+) is bound by residues aspartate 386, histidine 390, aspartate 427, histidine 428, and histidine 445.

Belongs to the BPG-independent phosphoglycerate mutase family. In terms of assembly, monomer. Mn(2+) serves as cofactor.

It carries out the reaction (2R)-2-phosphoglycerate = (2R)-3-phosphoglycerate. The protein operates within carbohydrate degradation; glycolysis; pyruvate from D-glyceraldehyde 3-phosphate: step 3/5. Functionally, catalyzes the interconversion of 2-phosphoglycerate and 3-phosphoglycerate. This Helicobacter pylori (strain J99 / ATCC 700824) (Campylobacter pylori J99) protein is 2,3-bisphosphoglycerate-independent phosphoglycerate mutase.